The primary structure comprises 244 residues: 27 kDa core protein (244 aa).

The protein belongs to the chordopoxvirinae D3 family.

The protein localises to the virion. Late protein which is part of a large complex required for early virion morphogenesis. This complex participates in the formation of virosomes and the incorporation of virosomal contents into nascent immature virions. This chain is 27 kDa core protein, found in Swinepox virus (strain Swine/Nebraska/17077-99/1999) (SWPV).